An 840-amino-acid chain; its full sequence is Protein translocase subunit SecA (840 aa).

ATP contacts are provided by residues Q87, 105 to 109, and D494; that span reads GEGKT. The tract at residues 518–537 is disordered; the sequence is RRIDNQLRGRSGRQGDPGSS. Positions 826, 828, 837, and 838 each coordinate Zn(2+).

The protein belongs to the SecA family. In terms of assembly, monomer and homodimer. Part of the essential Sec protein translocation apparatus which comprises SecA, SecYEG and auxiliary proteins SecDF-YajC and YidC. Zn(2+) is required as a cofactor.

The protein localises to the cell inner membrane. The protein resides in the cytoplasm. It carries out the reaction ATP + H2O + cellular proteinSide 1 = ADP + phosphate + cellular proteinSide 2.. Its function is as follows. Part of the Sec protein translocase complex. Interacts with the SecYEG preprotein conducting channel. Has a central role in coupling the hydrolysis of ATP to the transfer of proteins into and across the cell membrane, serving as an ATP-driven molecular motor driving the stepwise translocation of polypeptide chains across the membrane. In Desulforapulum autotrophicum (strain ATCC 43914 / DSM 3382 / VKM B-1955 / HRM2) (Desulfobacterium autotrophicum), this protein is Protein translocase subunit SecA.